Reading from the N-terminus, the 232-residue chain is Protein FAM228B (232 aa).

The protein belongs to the FAM228 family.

The chain is Protein FAM228B (Fam228b) from Mus musculus (Mouse).